A 354-amino-acid polypeptide reads, in one-letter code: UPF0421 protein BH2644 (354 aa).

A run of 4 helical transmembrane segments spans residues 22–42, 60–80, 107–127, and 133–153; these read AVCL…FAVI, LIRL…AYFF, TLVA…HLFA, and VAGT…ILPP.

Belongs to the UPF0421 family.

It localises to the cell membrane. The chain is UPF0421 protein BH2644 from Halalkalibacterium halodurans (strain ATCC BAA-125 / DSM 18197 / FERM 7344 / JCM 9153 / C-125) (Bacillus halodurans).